A 569-amino-acid polypeptide reads, in one-letter code: MKMSREEYAELFGPTTGDKIRLGDTDLWIEVEKDFTVYGEEMIFGGGKTIRDGMGQNGRITGKDGALDLVITNVVLLDYTGIVKADVGVKDGRIVGVGKSGNPDIMDGVDPHMVIGAGTEVISGEGKILTAGGVDTHIHFICPQQMEVALSSGVTTLLGGGTGPATGSKATTCTSGAWYMARMLEAAEEFPINVGFLGKGNASDKAPLIEQVEAGAIGLKLHEDWGTTPSAIKTCMEVVDEADIQVAIHTDTINEAGFLENTLDAIGDRVIHTYHIEGAGGGHAPDIMKLASYANILPSSTTPTIPYTVNTMDEHLDMMMVCHHLDAKVPEDVAFSHSRIRAATIAAEDILHDIGAISMTSSDSQAMGRVGEVIIRTWQVADKMKKQRGALAGENGNDNVRAKRYIAKYTINPAITHGLSHEVGSVEKGKLADLVLWDPVFFGVKPELVLKGGMIARAQMGDPNASIPTPEPVFMRQMYASYGKANRSTSITFMSQASIERGVAESLGLEKRISPVKNIRKLSKLDMKLNSALPKIEIDPKTYQVFADGEELSCQPVDYVPLGQRYFLF.

The 438-residue stretch at 132–569 folds into the Urease domain; sequence GGVDTHIHFI…VPLGQRYFLF (438 aa). Ni(2+)-binding residues include H137, H139, and K220. N6-carboxylysine is present on K220. H222 serves as a coordination point for substrate. Ni(2+) contacts are provided by H249 and H275. H323 functions as the Proton donor in the catalytic mechanism. Position 363 (D363) interacts with Ni(2+).

It belongs to the metallo-dependent hydrolases superfamily. Urease alpha subunit family. Heterotrimer of UreA (gamma), UreB (beta) and UreC (alpha) subunits. Three heterotrimers associate to form the active enzyme. The cofactor is Ni cation. Carboxylation allows a single lysine to coordinate two nickel ions.

It localises to the cytoplasm. The enzyme catalyses urea + 2 H2O + H(+) = hydrogencarbonate + 2 NH4(+). Its pathway is nitrogen metabolism; urea degradation; CO(2) and NH(3) from urea (urease route): step 1/1. In Bacillus subtilis (strain 168), this protein is Urease subunit alpha.